The following is a 702-amino-acid chain: Polyribonucleotide nucleotidyltransferase (702 aa).

Residues Asp-485 and Asp-491 each contribute to the Mg(2+) site. Positions 552 to 612 (PRTEIICIDP…EGVKKAISII (61 aa)) constitute a KH domain. The region spanning 622–690 (GEIYLGKVTK…NQGRINLSRK (69 aa)) is the S1 motif domain.

It belongs to the polyribonucleotide nucleotidyltransferase family. The cofactor is Mg(2+).

It is found in the cytoplasm. It catalyses the reaction RNA(n+1) + phosphate = RNA(n) + a ribonucleoside 5'-diphosphate. In terms of biological role, involved in mRNA degradation. Catalyzes the phosphorolysis of single-stranded polyribonucleotides processively in the 3'- to 5'-direction. This chain is Polyribonucleotide nucleotidyltransferase, found in Clostridium botulinum (strain Kyoto / Type A2).